Consider the following 406-residue polypeptide: Tryptophan synthase beta chain (406 aa).

N6-(pyridoxal phosphate)lysine is present on Lys-99.

The protein belongs to the TrpB family. Tetramer of two alpha and two beta chains. The cofactor is pyridoxal 5'-phosphate.

The enzyme catalyses (1S,2R)-1-C-(indol-3-yl)glycerol 3-phosphate + L-serine = D-glyceraldehyde 3-phosphate + L-tryptophan + H2O. It participates in amino-acid biosynthesis; L-tryptophan biosynthesis; L-tryptophan from chorismate: step 5/5. Its function is as follows. The beta subunit is responsible for the synthesis of L-tryptophan from indole and L-serine. The polypeptide is Tryptophan synthase beta chain (Brucella anthropi (strain ATCC 49188 / DSM 6882 / CCUG 24695 / JCM 21032 / LMG 3331 / NBRC 15819 / NCTC 12168 / Alc 37) (Ochrobactrum anthropi)).